Consider the following 385-residue polypeptide: Multidrug resistance protein MdtE (385 aa).

The first 20 residues, 1 to 20 (MNRRRKLLIPLLFCGAMLTA), serve as a signal peptide directing secretion. The N-palmitoyl cysteine moiety is linked to residue Cys-21. Residue Cys-21 is the site of S-diacylglycerol cysteine attachment.

This sequence belongs to the membrane fusion protein (MFP) (TC 8.A.1) family. In terms of assembly, homotrimer. Part of the tripartite efflux system MdtEF-TolC, which is composed of an inner membrane transporter, MdtF, a membrane fusion protein, MdtE, and an outer membrane component, TolC. The complex forms a large protein conduit and can translocate molecules across both the inner and outer membranes.

The protein resides in the cell inner membrane. Part of the tripartite efflux system MdtEF-TolC, which confers resistance to various compounds. The polypeptide is Multidrug resistance protein MdtE (mdtE) (Escherichia coli O157:H7).